A 190-amino-acid polypeptide reads, in one-letter code: Methylamine utilization protein MauE (190 aa).

A run of 5 helical transmembrane segments spans residues 8–28 (PTVA…AAIP), 49–69 (FLVA…AIAL), 77–97 (LAAC…AVNV), 126–146 (ALAL…ISGI), and 154–174 (ALAS…MVGF).

It is found in the cell membrane. Its pathway is one-carbon metabolism; methylamine degradation. Functionally, may be specifically involved in the processing, transport, and/or maturation of the MADH beta-subunit. This chain is Methylamine utilization protein MauE (mauE), found in Methylophilus methylotrophus (Bacterium W3A1).